Here is a 360-residue protein sequence, read N- to C-terminus: Peptide chain release factor 1 (360 aa).

The residue at position 237 (Q237) is an N5-methylglutamine.

It belongs to the prokaryotic/mitochondrial release factor family. Post-translationally, methylated by PrmC. Methylation increases the termination efficiency of RF1.

Its subcellular location is the cytoplasm. Its function is as follows. Peptide chain release factor 1 directs the termination of translation in response to the peptide chain termination codons UAG and UAA. The chain is Peptide chain release factor 1 from Pseudomonas aeruginosa (strain LESB58).